Reading from the N-terminus, the 173-residue chain is NADH-ubiquinone oxidoreductase chain 6 (173 aa).

A run of 5 helical transmembrane segments spans residues 1 to 21, 27 to 47, 48 to 68, 91 to 111, and 141 to 161; these read MTYF…AVAS, YGVV…LSLG, VSFV…VVFV, GVGF…IGCL, and VGMF…VLEL.

The protein belongs to the complex I subunit 6 family.

The protein localises to the mitochondrion membrane. It carries out the reaction a ubiquinone + NADH + 5 H(+)(in) = a ubiquinol + NAD(+) + 4 H(+)(out). In terms of biological role, core subunit of the mitochondrial membrane respiratory chain NADH dehydrogenase (Complex I) that is believed to belong to the minimal assembly required for catalysis. Complex I functions in the transfer of electrons from NADH to the respiratory chain. The immediate electron acceptor for the enzyme is believed to be ubiquinone. This chain is NADH-ubiquinone oxidoreductase chain 6 (MT-ND6), found in Fratercula arctica (Atlantic puffin).